The sequence spans 644 residues: Exoribonuclease 2 (644 aa).

Residues 189–516 enclose the RNB domain; the sequence is REDLTALDFV…NHRLLKAVIK (328 aa). The region spanning 561 to 643 is the S1 motif domain; sequence DTRFAAEIVD…ETRSIIARPV (83 aa).

This sequence belongs to the RNR ribonuclease family. RNase II subfamily.

It localises to the cytoplasm. It catalyses the reaction Exonucleolytic cleavage in the 3'- to 5'-direction to yield nucleoside 5'-phosphates.. Functionally, involved in mRNA degradation. Hydrolyzes single-stranded polyribonucleotides processively in the 3' to 5' direction. The protein is Exoribonuclease 2 of Escherichia coli (strain ATCC 8739 / DSM 1576 / NBRC 3972 / NCIMB 8545 / WDCM 00012 / Crooks).